The sequence spans 218 residues: Small ribosomal subunit protein uS3c (218 aa).

The KH type-2 domain maps to 47–118 (VQKNIRISSG…KLNIAITRIS (72 aa)).

Belongs to the universal ribosomal protein uS3 family. Part of the 30S ribosomal subunit.

The protein resides in the plastid. It localises to the chloroplast. The polypeptide is Small ribosomal subunit protein uS3c (rps3) (Arabis hirsuta (Hairy rock-cress)).